We begin with the raw amino-acid sequence, 198 residues long: Syndecan-4 (198 aa).

A signal peptide spans 1 to 18; that stretch reads MAPARLFALLLFFVGGVA. Topologically, residues 19–145 are extracellular; sequence ESIRETEVID…QGSNIFERTE (127 aa). Residues Ser39, Ser61, and Ser63 are each glycosylated (O-linked (Xyl...) (glycosaminoglycan) serine). The O-linked (Xyl...) (chondroitin sulfate) serine glycan is linked to Ser95. Residues 146 to 170 traverse the membrane as a helical segment; it reads VLAALIVGGIVGILFAVFLILLLMY. Topologically, residues 171–198 are cytoplasmic; sequence RMKKKDEGSYDLGKKPIYKKAPTNEFYA.

Belongs to the syndecan proteoglycan family. As to quaternary structure, homodimer. Interacts (via its cytoplasmic domain) with GIPC (via its PDZ domain). Interacts (via its cytoplasmic domain) with NUDT16L1. Interacts with CDCP1 and SDCBP. Interacts with DNM2; this interaction is markedly enhanced at focal ahesion site upon induction of focal adhesions and stress-fiber formation. Post-translationally, shedding is enhanced by a number of factors such as heparanase, thrombin or EGF. Also by stress and wound healing. PMA-mediated shedding is inhibited by TIMP3. In terms of processing, O-glycosylated; contains both chondroitin sulfate and heparan sulfate. Ser-39, Ser-61 and Ser-63 can all be modified by either chondroitin sulfate or heparan sulfate, and the protein exists in forms that contain only chondroitin sulfate, only heparan sulfate and both chondroitin sulfate and heparan sulfate. Detected in fibroblasts (at protein level). Also expressed in epithelial cells.

It is found in the membrane. The protein localises to the secreted. Its function is as follows. Cell surface proteoglycan which regulates exosome biogenesis in concert with SDCBP and PDCD6IP. The protein is Syndecan-4 of Homo sapiens (Human).